The primary structure comprises 208 residues: Small ribosomal subunit protein uS9c (208 aa).

A chloroplast-targeting transit peptide spans methionine 1–alanine 52.

The protein belongs to the universal ribosomal protein uS9 family.

The protein localises to the plastid. The protein resides in the chloroplast. Functionally, binds directly to 16S ribosomal RNA. The sequence is that of Small ribosomal subunit protein uS9c (RPS9) from Arabidopsis thaliana (Mouse-ear cress).